Consider the following 180-residue polypeptide: MLLVGRIGKSVGLNGGLKLHLESDFPECLKKGVKVSVAPLNAFSHASFKDYVIHSYEHAKNLLFLETINTPEMARELTNLGLFMSETESKKLCVLKEGEFFYCDLIGLSVVEENEILGKVIEIQRISHIDYFMVETTLNLVEKGLAKIFLIPYRDFYIKEILLQDKKITTNNAKTLLENS.

One can recognise a PRC barrel domain in the interval 97–176 (EGEFFYCDLI…KITTNNAKTL (80 aa)).

This sequence belongs to the RimM family. As to quaternary structure, binds ribosomal protein uS19.

The protein resides in the cytoplasm. Its function is as follows. An accessory protein needed during the final step in the assembly of 30S ribosomal subunit, possibly for assembly of the head region. Essential for efficient processing of 16S rRNA. May be needed both before and after RbfA during the maturation of 16S rRNA. It has affinity for free ribosomal 30S subunits but not for 70S ribosomes. The polypeptide is Ribosome maturation factor RimM (Helicobacter acinonychis (strain Sheeba)).